A 160-amino-acid chain; its full sequence is 6,7-dimethyl-8-ribityllumazine synthase (160 aa).

5-amino-6-(D-ribitylamino)uracil is bound by residues tryptophan 27, alanine 59–glutamate 61, and valine 81–isoleucine 83. Aspartate 86–threonine 87 contacts (2S)-2-hydroxy-3-oxobutyl phosphate. Histidine 89 serves as the catalytic Proton donor. Asparagine 114 lines the 5-amino-6-(D-ribitylamino)uracil pocket. Arginine 128 is a binding site for (2S)-2-hydroxy-3-oxobutyl phosphate.

This sequence belongs to the DMRL synthase family. Homopentamer.

The enzyme catalyses (2S)-2-hydroxy-3-oxobutyl phosphate + 5-amino-6-(D-ribitylamino)uracil = 6,7-dimethyl-8-(1-D-ribityl)lumazine + phosphate + 2 H2O + H(+). It functions in the pathway cofactor biosynthesis; riboflavin biosynthesis; riboflavin from 2-hydroxy-3-oxobutyl phosphate and 5-amino-6-(D-ribitylamino)uracil: step 1/2. Catalyzes the formation of 6,7-dimethyl-8-ribityllumazine by condensation of 5-amino-6-(D-ribitylamino)uracil with 3,4-dihydroxy-2-butanone 4-phosphate. This is the penultimate step in the biosynthesis of riboflavin. The polypeptide is 6,7-dimethyl-8-ribityllumazine synthase (Mycobacterium leprae (strain Br4923)).